The chain runs to 75 residues: Small ribosomal subunit protein bS18 (75 aa).

Belongs to the bacterial ribosomal protein bS18 family. Part of the 30S ribosomal subunit. Forms a tight heterodimer with protein bS6.

Functionally, binds as a heterodimer with protein bS6 to the central domain of the 16S rRNA, where it helps stabilize the platform of the 30S subunit. In Pseudoalteromonas translucida (strain TAC 125), this protein is Small ribosomal subunit protein bS18.